A 459-amino-acid polypeptide reads, in one-letter code: Zinc finger protein ZPR1 (459 aa).

Low complexity predominate over residues 1-29; the sequence is MSAGGAVEPGLPAAAAAPSAAPARDPGPG. Residues 1-43 form a disordered region; the sequence is MSAGGAVEPGLPAAAAAPSAAPARDPGPGHLFRPISAEDEEQQ. C4-type zinc fingers lie at residues 51-83 and 259-291; these read CMNCYRNGMTRLLLTKIPFFREIIVSSFSCEHC and CPECNAPAQTNMKLVQIPHFKEVIIMATNCENC. Positions 438–459 are disordered; it reads NEELGLNDMKTEGYETGLPAQR.

It belongs to the ZPR1 family. As to quaternary structure, component of an import snRNP complex composed of KPNB1, SNUPN, SMN1 and ZNF259. Interacts (via C-terminal region) with SMN1 (via C-terminal region); the interaction occurs after treatment with serum. Interacts with elongation factor 1-alpha EEF1A1; the interaction occurs in a epidermal growth factor (EGF)-dependent manner. Interacts (via zinc fingers) with EGFR (via C-terminal cytoplasmic kinase domain); the interaction is negatively regulated in response to epidermal growth factor (EGF) stimulation and EGFR kinase activity. May also bind to the PDGFR receptor.

The protein resides in the nucleus. It localises to the cytoplasm. Its subcellular location is the nucleolus. It is found in the perinuclear region. The protein localises to the gem. The protein resides in the cajal body. It localises to the cell projection. Its subcellular location is the axon. It is found in the growth cone. Functionally, acts as a signaling molecule that communicates proliferative growth signals from the cytoplasm to the nucleus. Plays a role for the localization and accumulation of the survival motor neuron protein SMN1 in sub-nuclear bodies, including gems and Cajal bodies. Induces neuron differentiation and stimulates axonal growth and formation of growth cone in spinal cord motor neurons. Plays a role in the splicing of cellular pre-mRNAs. May be involved in H(2)O(2)-induced neuronal cell death. This Bos taurus (Bovine) protein is Zinc finger protein ZPR1 (ZNF259).